The chain runs to 265 residues: Indole-3-glycerol phosphate synthase (265 aa).

The protein belongs to the TrpC family.

It carries out the reaction 1-(2-carboxyphenylamino)-1-deoxy-D-ribulose 5-phosphate + H(+) = (1S,2R)-1-C-(indol-3-yl)glycerol 3-phosphate + CO2 + H2O. The protein operates within amino-acid biosynthesis; L-tryptophan biosynthesis; L-tryptophan from chorismate: step 4/5. The chain is Indole-3-glycerol phosphate synthase from Xanthomonas euvesicatoria pv. vesicatoria (strain 85-10) (Xanthomonas campestris pv. vesicatoria).